A 318-amino-acid chain; its full sequence is Transaldolase (318 aa).

Catalysis depends on Lys-131, which acts as the Schiff-base intermediate with substrate.

Belongs to the transaldolase family. Type 1 subfamily. As to quaternary structure, homodimer.

It localises to the cytoplasm. The enzyme catalyses D-sedoheptulose 7-phosphate + D-glyceraldehyde 3-phosphate = D-erythrose 4-phosphate + beta-D-fructose 6-phosphate. Its pathway is carbohydrate degradation; pentose phosphate pathway; D-glyceraldehyde 3-phosphate and beta-D-fructose 6-phosphate from D-ribose 5-phosphate and D-xylulose 5-phosphate (non-oxidative stage): step 2/3. In terms of biological role, transaldolase is important for the balance of metabolites in the pentose-phosphate pathway. The protein is Transaldolase of Buchnera aphidicola subsp. Cinara cedri (strain Cc).